A 243-amino-acid polypeptide reads, in one-letter code: Ribonuclease 3 (243 aa).

The 137-residue stretch at 10-146 (VNRFRKRFDT…FIGALYLDQG (137 aa)) folds into the RNase III domain. Glu59 serves as a coordination point for Mg(2+). Residue Asp63 is part of the active site. Residues Asp132 and Glu135 each contribute to the Mg(2+) site. Glu135 is a catalytic residue. Residues 172–241 (DFKTQFQEYV…AESAYKQLKQ (70 aa)) form the DRBM domain. Basic and acidic residues predominate over residues 219-231 (GKGKTKKESEQRA). The interval 219–243 (GKGKTKKESEQRAAESAYKQLKQIK) is disordered.

This sequence belongs to the ribonuclease III family. In terms of assembly, homodimer. Mg(2+) is required as a cofactor.

It localises to the cytoplasm. The catalysed reaction is Endonucleolytic cleavage to 5'-phosphomonoester.. In terms of biological role, digests double-stranded RNA. Involved in the processing of primary rRNA transcript to yield the immediate precursors to the large and small rRNAs (23S and 16S). Processes some mRNAs, and tRNAs when they are encoded in the rRNA operon. Processes pre-crRNA and tracrRNA of type II CRISPR loci if present in the organism. The polypeptide is Ribonuclease 3 (Staphylococcus aureus (strain USA300)).